Here is a 328-residue protein sequence, read N- to C-terminus: Ribosomal RNA small subunit methyltransferase H (328 aa).

S-adenosyl-L-methionine is bound by residues 64–66 (GGH), Asp-83, Phe-112, Asp-129, and Gln-136.

The protein belongs to the methyltransferase superfamily. RsmH family.

It localises to the cytoplasm. It carries out the reaction cytidine(1402) in 16S rRNA + S-adenosyl-L-methionine = N(4)-methylcytidine(1402) in 16S rRNA + S-adenosyl-L-homocysteine + H(+). Specifically methylates the N4 position of cytidine in position 1402 (C1402) of 16S rRNA. In Bdellovibrio bacteriovorus (strain ATCC 15356 / DSM 50701 / NCIMB 9529 / HD100), this protein is Ribosomal RNA small subunit methyltransferase H.